The primary structure comprises 304 residues: Glutaminase (304 aa).

Substrate contacts are provided by S63, N114, E158, N165, Y189, Y240, and V258.

The protein belongs to the glutaminase family. In terms of assembly, homotetramer.

It carries out the reaction L-glutamine + H2O = L-glutamate + NH4(+). The protein is Glutaminase of Shewanella oneidensis (strain ATCC 700550 / JCM 31522 / CIP 106686 / LMG 19005 / NCIMB 14063 / MR-1).